We begin with the raw amino-acid sequence, 153 residues long: Movement protein (153 aa).

Disordered stretches follow at residues 1 to 24 (MAQE…EQDP) and 107 to 153 (ALSL…RNQR). Composition is skewed to polar residues over residues 109–122 (SLLS…NQPW) and 140–153 (GQRQ…RNQR).

The protein belongs to the luteoviruses movement protein family.

The protein resides in the host nucleus envelope. Its function is as follows. Transports viral genome to neighboring plant cells directly through plasmosdesmata, without any budding. The movement protein allows efficient cell to cell propagation, by bypassing the host cell wall barrier. Acts as a suppressor of RNA-mediated gene silencing, also known as post-transcriptional gene silencing (PTGS), a mechanism of plant viral defense that limits the accumulation of viral RNAs. The chain is Movement protein from Avena byzantina (Oat).